The sequence spans 48 residues: uncharacterized protein (48 aa).

Positions 1–48 (MTKIPINIPATSGKIKFGITPSSNKSPSLSPSPSNGQLGGGRGYILEP) are disordered. The span at 21-36 (PSSNKSPSLSPSPSNG) shows a compositional bias: low complexity. Residues 37-48 (QLGGGRGYILEP) are compositionally biased toward gly residues.

This is an uncharacterized protein from Dictyostelium discoideum (Social amoeba).